We begin with the raw amino-acid sequence, 379 residues long: tRNA (guanine(26)-N(2))-dimethyltransferase (379 aa).

Positions 4–375 (VEVLEGKAKI…APYEVFVNVL (372 aa)) constitute a Trm1 methyltransferase domain. S-adenosyl-L-methionine contacts are provided by Arg-36, Arg-61, Asp-78, Asp-120, and Ala-121.

It belongs to the class I-like SAM-binding methyltransferase superfamily. Trm1 family.

The catalysed reaction is guanosine(26) in tRNA + 2 S-adenosyl-L-methionine = N(2)-dimethylguanosine(26) in tRNA + 2 S-adenosyl-L-homocysteine + 2 H(+). Its function is as follows. Dimethylates a single guanine residue at position 26 of a number of tRNAs using S-adenosyl-L-methionine as donor of the methyl groups. This Pyrococcus abyssi (strain GE5 / Orsay) protein is tRNA (guanine(26)-N(2))-dimethyltransferase.